The sequence spans 235 residues: 2-C-methyl-D-erythritol 4-phosphate cytidylyltransferase (235 aa).

This sequence belongs to the IspD/TarI cytidylyltransferase family. IspD subfamily.

It catalyses the reaction 2-C-methyl-D-erythritol 4-phosphate + CTP + H(+) = 4-CDP-2-C-methyl-D-erythritol + diphosphate. It participates in isoprenoid biosynthesis; isopentenyl diphosphate biosynthesis via DXP pathway; isopentenyl diphosphate from 1-deoxy-D-xylulose 5-phosphate: step 2/6. Its function is as follows. Catalyzes the formation of 4-diphosphocytidyl-2-C-methyl-D-erythritol from CTP and 2-C-methyl-D-erythritol 4-phosphate (MEP). The protein is 2-C-methyl-D-erythritol 4-phosphate cytidylyltransferase of Pseudomonas putida (strain GB-1).